Consider the following 199-residue polypeptide: Probable chemoreceptor glutamine deamidase CheD (199 aa).

Belongs to the CheD family.

The enzyme catalyses L-glutaminyl-[protein] + H2O = L-glutamyl-[protein] + NH4(+). Its function is as follows. Probably deamidates glutamine residues to glutamate on methyl-accepting chemotaxis receptors (MCPs), playing an important role in chemotaxis. This chain is Probable chemoreceptor glutamine deamidase CheD, found in Cereibacter sphaeroides (strain ATCC 17025 / ATH 2.4.3) (Rhodobacter sphaeroides).